Reading from the N-terminus, the 230-residue chain is Enolase-phosphatase E1 (230 aa).

The protein belongs to the HAD-like hydrolase superfamily. MasA/MtnC family. As to quaternary structure, monomer. Mg(2+) serves as cofactor.

It catalyses the reaction 5-methylsulfanyl-2,3-dioxopentyl phosphate + H2O = 1,2-dihydroxy-5-(methylsulfanyl)pent-1-en-3-one + phosphate. It participates in amino-acid biosynthesis; L-methionine biosynthesis via salvage pathway; L-methionine from S-methyl-5-thio-alpha-D-ribose 1-phosphate: step 3/6. It functions in the pathway amino-acid biosynthesis; L-methionine biosynthesis via salvage pathway; L-methionine from S-methyl-5-thio-alpha-D-ribose 1-phosphate: step 4/6. In terms of biological role, bifunctional enzyme that catalyzes the enolization of 2,3-diketo-5-methylthiopentyl-1-phosphate (DK-MTP-1-P) into the intermediate 2-hydroxy-3-keto-5-methylthiopentenyl-1-phosphate (HK-MTPenyl-1-P), which is then dephosphorylated to form the acireductone 1,2-dihydroxy-3-keto-5-methylthiopentene (DHK-MTPene). This is Enolase-phosphatase E1 from Sulfurihydrogenibium sp. (strain YO3AOP1).